Here is a 172-residue protein sequence, read N- to C-terminus: Cytidylate kinase (172 aa).

Residue 7–15 (GPPGSGTST) coordinates ATP.

Belongs to the cytidylate kinase family. Type 2 subfamily.

The protein localises to the cytoplasm. It carries out the reaction CMP + ATP = CDP + ADP. The catalysed reaction is dCMP + ATP = dCDP + ADP. This Methanothrix thermoacetophila (strain DSM 6194 / JCM 14653 / NBRC 101360 / PT) (Methanosaeta thermophila) protein is Cytidylate kinase.